The primary structure comprises 282 residues: Shikimate dehydrogenase (NADP(+)) (282 aa).

Shikimate is bound by residues 15 to 17 (SKS) and Thr62. Lys66 (proton acceptor) is an active-site residue. Shikimate contacts are provided by Asn87 and Asp103. NADP(+)-binding positions include 128–132 (GAGGA), 152–157 (NRTPAK), and Met216. Tyr218 contacts shikimate. An NADP(+)-binding site is contributed by Gly240.

The protein belongs to the shikimate dehydrogenase family. In terms of assembly, homodimer.

The enzyme catalyses shikimate + NADP(+) = 3-dehydroshikimate + NADPH + H(+). It functions in the pathway metabolic intermediate biosynthesis; chorismate biosynthesis; chorismate from D-erythrose 4-phosphate and phosphoenolpyruvate: step 4/7. Functionally, involved in the biosynthesis of the chorismate, which leads to the biosynthesis of aromatic amino acids. Catalyzes the reversible NADPH linked reduction of 3-dehydroshikimate (DHSA) to yield shikimate (SA). The protein is Shikimate dehydrogenase (NADP(+)) of Nitrosococcus oceani (strain ATCC 19707 / BCRC 17464 / JCM 30415 / NCIMB 11848 / C-107).